The chain runs to 235 residues: Ubiquinone/menaquinone biosynthesis C-methyltransferase UbiE (235 aa).

S-adenosyl-L-methionine contacts are provided by threonine 60, aspartate 81, and serine 126.

Belongs to the class I-like SAM-binding methyltransferase superfamily. MenG/UbiE family.

It carries out the reaction a 2-demethylmenaquinol + S-adenosyl-L-methionine = a menaquinol + S-adenosyl-L-homocysteine + H(+). It catalyses the reaction a 2-methoxy-6-(all-trans-polyprenyl)benzene-1,4-diol + S-adenosyl-L-methionine = a 5-methoxy-2-methyl-3-(all-trans-polyprenyl)benzene-1,4-diol + S-adenosyl-L-homocysteine + H(+). The protein operates within quinol/quinone metabolism; menaquinone biosynthesis; menaquinol from 1,4-dihydroxy-2-naphthoate: step 2/2. It functions in the pathway cofactor biosynthesis; ubiquinone biosynthesis. Methyltransferase required for the conversion of demethylmenaquinol (DMKH2) to menaquinol (MKH2) and the conversion of 2-polyprenyl-6-methoxy-1,4-benzoquinol (DDMQH2) to 2-polyprenyl-3-methyl-6-methoxy-1,4-benzoquinol (DMQH2). The polypeptide is Ubiquinone/menaquinone biosynthesis C-methyltransferase UbiE (Geobacter sp. (strain M21)).